Reading from the N-terminus, the 367-residue chain is D-alanine--D-alanine ligase (367 aa).

One can recognise an ATP-grasp domain in the interval 148 to 357 (KMAFEQAGLP…FPELVDKLVQ (210 aa)). ATP is bound at residue 184–239 (EASLGYPCFVKPANLGSSVGISKVRSRQELEDALDNAANYDRRIIVEAGVVAREVE). Mg(2+)-binding residues include Asp-310, Glu-324, and Asn-326.

The protein belongs to the D-alanine--D-alanine ligase family. The cofactor is Mg(2+). Mn(2+) serves as cofactor.

It is found in the cytoplasm. The catalysed reaction is 2 D-alanine + ATP = D-alanyl-D-alanine + ADP + phosphate + H(+). It participates in cell wall biogenesis; peptidoglycan biosynthesis. Its function is as follows. Cell wall formation. This is D-alanine--D-alanine ligase from Trichormus variabilis (strain ATCC 29413 / PCC 7937) (Anabaena variabilis).